A 191-amino-acid chain; its full sequence is Peptidyl-tRNA hydrolase (191 aa).

Tyr-14 serves as a coordination point for tRNA. Residue His-19 is the Proton acceptor of the active site. TRNA contacts are provided by Tyr-65, Asn-67, and Asn-113.

Belongs to the PTH family. Monomer.

It localises to the cytoplasm. It catalyses the reaction an N-acyl-L-alpha-aminoacyl-tRNA + H2O = an N-acyl-L-amino acid + a tRNA + H(+). Hydrolyzes ribosome-free peptidyl-tRNAs (with 1 or more amino acids incorporated), which drop off the ribosome during protein synthesis, or as a result of ribosome stalling. Its function is as follows. Catalyzes the release of premature peptidyl moieties from peptidyl-tRNA molecules trapped in stalled 50S ribosomal subunits, and thus maintains levels of free tRNAs and 50S ribosomes. This is Peptidyl-tRNA hydrolase from Nitrosospira multiformis (strain ATCC 25196 / NCIMB 11849 / C 71).